The sequence spans 1755 residues: Transposon Ty1-DR1 Gag-Pol polyprotein (1755 aa).

Composition is skewed to polar residues over residues 1 to 10, 48 to 60, and 127 to 152; these read MESQQLSNYP, TKANSQQTTTPAS, and QSQFPQYPSSVGTPLSTPSPESGNTF. Disordered regions lie at residues 1–93, 126–173, and 352–421; these read MESQ…MMTQ, PQSQ…RPPP, and GSRN…SKST. Residues 153–165 are compositionally biased toward low complexity; sequence TDSSSADSDMTST. Residues 299–401 are RNA-binding; the sequence is NNGIHINNKV…NSKSKTARAH (103 aa). Low complexity predominate over residues 402-418; that stretch reads NVSTSNNSPSTDNDSIS. At Ser416 the chain carries Phosphoserine. Asp461 acts as the For protease activity; shared with dimeric partner in catalysis. Positions 583-640 are integrase-type zinc finger-like; sequence NVHTSESTRKYPYPFIHRMLAHANAQTIRYSLKNNTITYFNESDVDWSSAIDYQCPDC. Residues 660-835 form the Integrase catalytic domain; sequence NSYEPFQYLH…AGLDISTLLP (176 aa). The Mg(2+) site is built by Asp671 and Asp736. Disordered stretches follow at residues 956 to 1087, 1092 to 1111, and 1130 to 1187; these read SKAV…ETEK, RSPSIDASPPENNSSHNIVP, and DLPL…DNET. Over residues 960–969 the composition is skewed to low complexity; that stretch reads SPTDSTPPST. The segment covering 1005 to 1015 has biased composition (polar residues); it reads STPQISNIEST. The span at 1038-1053 shows a compositional bias: basic and acidic residues; that stretch reads ESSHASKSKDFRHSDS. Polar residues-rich tracts occupy residues 1054 to 1082 and 1101 to 1111; these read YSENETNHTNVPISSTGGTNNKTVPQISD and PENNSSHNIVP. The Bipartite nuclear localization signal signature appears at 1178 to 1212; sequence KKRSLEDNETEIKVSRDTWNTKNMRSLEPPRSKKR. The Reverse transcriptase Ty1/copia-type domain maps to 1338 to 1476; sequence NNYYITQLDI…DILGLEIKYQ (139 aa). The Mg(2+) site is built by Asp1346, Asp1427, Asp1428, Asp1610, Glu1652, and Asp1685. Residues 1610–1752 enclose the RNase H Ty1/copia-type domain; that stretch reads DASYGNQPYY…IKTFKLLTNK (143 aa).

In terms of assembly, the capsid protein forms a homotrimer, from which the VLPs are assembled. The protease is a homodimer, whose active site consists of two apposed aspartic acid residues. Initially, virus-like particles (VLPs) are composed of the structural unprocessed proteins Gag and Gag-Pol, and also contain the host initiator methionine tRNA (tRNA(i)-Met) which serves as a primer for minus-strand DNA synthesis, and a dimer of genomic Ty RNA. Processing of the polyproteins occurs within the particle and proceeds by an ordered pathway, called maturation. First, the protease (PR) is released by autocatalytic cleavage of the Gag-Pol polyprotein yielding capsid protein p45 and a Pol-p154 precursor protein. This cleavage is a prerequisite for subsequent processing of Pol-p154 at the remaining sites to release the mature structural and catalytic proteins. Maturation takes place prior to the RT reaction and is required to produce transposition-competent VLPs.

It localises to the cytoplasm. It is found in the nucleus. It catalyses the reaction DNA(n) + a 2'-deoxyribonucleoside 5'-triphosphate = DNA(n+1) + diphosphate. The enzyme catalyses Endonucleolytic cleavage to 5'-phosphomonoester.. Capsid protein (CA) is the structural component of the virus-like particle (VLP), forming the shell that encapsulates the retrotransposons dimeric RNA genome. The particles are assembled from trimer-clustered units and there are holes in the capsid shells that allow for the diffusion of macromolecules. CA also has nucleocapsid-like chaperone activity, promoting primer tRNA(i)-Met annealing to the multipartite primer-binding site (PBS), dimerization of Ty1 RNA and initiation of reverse transcription. Functionally, the aspartyl protease (PR) mediates the proteolytic cleavages of the Gag and Gag-Pol polyproteins after assembly of the VLP. In terms of biological role, reverse transcriptase/ribonuclease H (RT) is a multifunctional enzyme that catalyzes the conversion of the retro-elements RNA genome into dsDNA within the VLP. The enzyme displays a DNA polymerase activity that can copy either DNA or RNA templates, and a ribonuclease H (RNase H) activity that cleaves the RNA strand of RNA-DNA heteroduplexes during plus-strand synthesis and hydrolyzes RNA primers. The conversion leads to a linear dsDNA copy of the retrotransposon that includes long terminal repeats (LTRs) at both ends. Its function is as follows. Integrase (IN) targets the VLP to the nucleus, where a subparticle preintegration complex (PIC) containing at least integrase and the newly synthesized dsDNA copy of the retrotransposon must transit the nuclear membrane. Once in the nucleus, integrase performs the integration of the dsDNA into the host genome. The protein is Transposon Ty1-DR1 Gag-Pol polyprotein (TY1B-DR1) of Saccharomyces cerevisiae (strain ATCC 204508 / S288c) (Baker's yeast).